Here is a 490-residue protein sequence, read N- to C-terminus: Glutathione hydrolase 6 (490 aa).

At 1-52 the chain is on the cytoplasmic side; that stretch reads MEPEAGPVLYQKLRVWEPSLESEEEEEEISEQLILDASGPHDSSGNKAGRLP. Residues 53 to 73 form a helical; Signal-anchor for type II membrane protein membrane-spanning segment; it reads GAWAQLVAALLLLAIGFSLAV. At 74-490 the chain is on the extracellular side; sequence RQLCSSGASP…PSGCCPFQGF (417 aa). N-linked (GlcNAc...) asparagine glycosylation is found at Asn-160, Asn-165, and Asn-374.

The protein belongs to the gamma-glutamyltransferase family. As to quaternary structure, heterodimer composed of the light and heavy chains. The active site is located in the light chain. In terms of processing, cleaved by autocatalysis into a large and a small subunit and the autocatalytic cleavage is essential to the functional activation of the enzyme.

Its subcellular location is the membrane. It carries out the reaction an N-terminal (5-L-glutamyl)-[peptide] + an alpha-amino acid = 5-L-glutamyl amino acid + an N-terminal L-alpha-aminoacyl-[peptide]. The enzyme catalyses glutathione + H2O = L-cysteinylglycine + L-glutamate. It catalyses the reaction an S-substituted glutathione + H2O = an S-substituted L-cysteinylglycine + L-glutamate. The protein operates within sulfur metabolism; glutathione metabolism. In terms of biological role, hydrolyzes and transfers gamma-glutamyl moieties from glutathione and other gamma-glutamyl compounds to acceptors. The protein is Glutathione hydrolase 6 of Bos taurus (Bovine).